Reading from the N-terminus, the 247-residue chain is 3-deoxy-manno-octulosonate cytidylyltransferase (247 aa).

It belongs to the KdsB family.

It is found in the cytoplasm. The catalysed reaction is 3-deoxy-alpha-D-manno-oct-2-ulosonate + CTP = CMP-3-deoxy-beta-D-manno-octulosonate + diphosphate. It participates in nucleotide-sugar biosynthesis; CMP-3-deoxy-D-manno-octulosonate biosynthesis; CMP-3-deoxy-D-manno-octulosonate from 3-deoxy-D-manno-octulosonate and CTP: step 1/1. Its pathway is bacterial outer membrane biogenesis; lipopolysaccharide biosynthesis. In terms of biological role, activates KDO (a required 8-carbon sugar) for incorporation into bacterial lipopolysaccharide in Gram-negative bacteria. This is 3-deoxy-manno-octulosonate cytidylyltransferase from Pelodictyon phaeoclathratiforme (strain DSM 5477 / BU-1).